The primary structure comprises 61 residues: Cytotoxin homolog 3 (61 aa).

Intrachain disulfides connect cysteine 3–cysteine 22, cysteine 15–cysteine 39, cysteine 43–cysteine 54, and cysteine 55–cysteine 60.

The protein belongs to the three-finger toxin family. Short-chain subfamily. Orphan group XV sub-subfamily. As to expression, expressed by the venom gland.

It localises to the secreted. It is found in the target cell membrane. Has low cytotoxic activity. In Naja melanoleuca (Forest cobra), this protein is Cytotoxin homolog 3.